Reading from the N-terminus, the 25-residue chain is Aurein-5.2 (25 aa).

As to expression, expressed by the skin dorsal glands.

The protein localises to the secreted. Has antimicrobial activity against L.lactis and S.uberis. This Ranoidea raniformis (Southern bell frog) protein is Aurein-5.2.